Reading from the N-terminus, the 343-residue chain is MMFPGLLAPPAGYPSLLRPTPTLTLPQSLQSAFSGHSSFLVEDLIRISRPPAYLPRSVPTASMSPPRQGAPTALTDTGASDLGSPGPGSRRGGSPPTAFSPASETTFLKFGVNAILSSGPRTETSPALLQSVPPKTFAFPYFEGSFQPFIRSSYFPASSSVVPIPGTFSWPLAARGKPRRGMLRRAVFSDVQRKALEKMFQKQKYISKPDRKKLAAKLGLKDSQVKIWFQNRRMKWRNSKERELLSSGGCREQTLPTKLNPHPDLSDVGQKGPGNEEEEEGPGSPSHRLAYHASSDPQHLRDPRLPGPLPPSPAHSSSPGKPSDFSDSEEEEEGEEQEEITVS.

Disordered regions lie at residues 56 to 100 (RSVP…TAFS) and 240 to 343 (KERE…ITVS). Positions 181–240 (GMLRRAVFSDVQRKALEKMFQKQKYISKPDRKKLAAKLGLKDSQVKIWFQNRRMKWRNSK) form a DNA-binding region, homeobox. Low complexity predominate over residues 314–323 (AHSSSPGKPS). Acidic residues predominate over residues 326-343 (SDSEEEEEGEEQEEITVS).

It belongs to the H2.0 homeobox family.

It localises to the nucleus. Could have a role in patterning the central nervous system during embryogenesis. Has a key role in regulating the distinct phenotypic features that distinguish two major classes of ventral interneurons, V0 and V1 neurons. Regulates the transcription factor profile, neurotransmitter phenotype, intraspinal migratory path and axonal trajectory of V0 neurons, features that differentiate them from an adjacent set of V1 neurons. The sequence is that of Homeobox protein DBX1 (DBX1) from Homo sapiens (Human).